The sequence spans 273 residues: Thymidylate synthase (273 aa).

Residue R31 participates in dUMP binding. H61 provides a ligand contact to (6R)-5,10-methylene-5,6,7,8-tetrahydrofolate. 136–137 (RR) provides a ligand contact to dUMP. The active-site Nucleophile is the C156. DUMP contacts are provided by residues 176-179 (RSAD), N187, and 217-219 (HIY). A (6R)-5,10-methylene-5,6,7,8-tetrahydrofolate-binding site is contributed by D179. A272 contacts (6R)-5,10-methylene-5,6,7,8-tetrahydrofolate.

It belongs to the thymidylate synthase family. Bacterial-type ThyA subfamily. In terms of assembly, homodimer.

The protein localises to the cytoplasm. The catalysed reaction is dUMP + (6R)-5,10-methylene-5,6,7,8-tetrahydrofolate = 7,8-dihydrofolate + dTMP. The protein operates within pyrimidine metabolism; dTTP biosynthesis. Its function is as follows. Catalyzes the reductive methylation of 2'-deoxyuridine-5'-monophosphate (dUMP) to 2'-deoxythymidine-5'-monophosphate (dTMP) while utilizing 5,10-methylenetetrahydrofolate (mTHF) as the methyl donor and reductant in the reaction, yielding dihydrofolate (DHF) as a by-product. This enzymatic reaction provides an intracellular de novo source of dTMP, an essential precursor for DNA biosynthesis. This Corynebacterium jeikeium (strain K411) protein is Thymidylate synthase.